The primary structure comprises 417 residues: Phosphoglycerate kinase 1 (417 aa).

S2 is subject to N-acetylserine. Phosphoserine is present on residues S2 and S4. Position 6 is an N6-succinyllysine (K6). K11 is subject to N6-acetyllysine. Residues V23, D24, F25, N26, Q38, and R39 each coordinate (2R)-3-phosphoglycerate. A mitochondrial targeting region exposed following cis-trans isomerization by PIN1 and recognized by the TOM complex for mitochondrial translocation of the protein region spans residues 38–43; it reads QRIKAA. Residue K48 is modified to N6-acetyllysine; alternate. The residue at position 48 (K48) is an N6-succinyllysine; alternate. S62, H63, G65, and R66 together coordinate (2R)-3-phosphoglycerate. At K75 the chain carries N6-acetyllysine. Position 76 is a phosphotyrosine (Y76). K86 and K91 each carry N6-acetyllysine. The residue at position 97 (K97) is an N6-acetyllysine; alternate. K97 bears the N6-(2-hydroxyisobutyryl)lysine; alternate mark. (2R)-3-phosphoglycerate is bound by residues L122 and R123. K131 is modified (N6-acetyllysine; alternate). K131 is subject to N6-malonyllysine; alternate. K146 is modified (N6-acetyllysine). 2 residues coordinate (2R)-3-phosphoglycerate: H170 and R171. K191 is modified (N6-succinyllysine). A Phosphotyrosine modification is found at Y196. K199 is modified (N6-acetyllysine). The residue at position 203 (S203) is a Phosphoserine. Residue G214 participates in ADP binding. Residue G214 coordinates CDP. 2 residues coordinate AMP: A215 and K216. An ATP-binding site is contributed by A215. A215 contributes to the Mg(2+) binding site. An N6-(2-hydroxyisobutyryl)lysine modification is found at K216. Mg(2+) contacts are provided by A218 and D219. A CDP-binding site is contributed by D219. K220 provides a ligand contact to AMP. Residue K220 coordinates ATP. K220 is modified (N6-(2-hydroxyisobutyryl)lysine). G238 contacts ADP. G238 serves as a coordination point for CDP. G239 lines the AMP pocket. G239 contributes to the ATP binding site. K267 and K291 each carry N6-acetyllysine. G313 contacts AMP. An ATP-binding site is contributed by G313. N6-(2-hydroxyisobutyryl)lysine is present on K323. Residues G338, V340, and F343 each contribute to the CDP site. ADP is bound at residue F343. E344 is a binding site for AMP. E344 contacts ATP. Phosphoserine is present on S354. K361 is subject to N6-acetyllysine. Residues D375 and T376 each coordinate ATP. D375 provides a ligand contact to Mg(2+).

Belongs to the phosphoglycerate kinase family. Monomer. Interacts with kinase MAPK1/ERK2; the interaction is direct, occurs under hypoxic conditions, and promotes its interaction with PIN1. Interacts with peptidyl-prolyl cis-trans isomerase PIN1; the interaction is direct, occurs under hypoxic conditions, and targets the protein to the mitochondrion by promoting interactions with the TOM complex. Interacts with mitochondrial circRNA mcPGK1 (via its 2nd stem-loop); the interaction is direct and targets the protein to the mitochondrion by promoting interactions with the TOM complex. Interacts with pyruvate dehydrogenase kinase PDK1; the interaction is direct, occurs under hypoxic conditions and leads to PDK1-mediated inhibition of pyruvate dehydrogenase complex activity. Mg(2+) serves as cofactor. Post-translationally, phosphorylated at Ser-203 by MAPK1/ERK2 under hypoxic conditions, which promotes its mitochondrial targeting.

The protein resides in the cytoplasm. It localises to the cytosol. Its subcellular location is the mitochondrion matrix. It catalyses the reaction (2R)-3-phosphoglycerate + ATP = (2R)-3-phospho-glyceroyl phosphate + ADP. The catalysed reaction is L-seryl-[protein] + ATP = O-phospho-L-seryl-[protein] + ADP + H(+). The protein operates within carbohydrate degradation; glycolysis; pyruvate from D-glyceraldehyde 3-phosphate: step 2/5. Its function is as follows. Catalyzes one of the two ATP producing reactions in the glycolytic pathway via the reversible conversion of 1,3-diphosphoglycerate to 3-phosphoglycerate. Both L- and D- forms of purine and pyrimidine nucleotides can be used as substrates, but the activity is much lower on pyrimidines. In addition to its role as a glycolytic enzyme, it seems that PGK-1 acts as a polymerase alpha cofactor protein (primer recognition protein). Acts as a protein kinase when localized to the mitochondrion where it phosphorylates pyruvate dehydrogenase kinase PDK1 to inhibit pyruvate dehydrogenase complex activity and suppress the formation of acetyl-coenzyme A from pyruvate, and consequently inhibit oxidative phosphorylation and promote glycolysis. May play a role in sperm motility. This chain is Phosphoglycerate kinase 1 (Pgk1), found in Rattus norvegicus (Rat).